The following is a 236-amino-acid chain: Lipoprotein B (236 aa).

An N-terminal signal peptide occupies residues 1-27 (MNKKYFKKYSSILIFSMSILAPMTLAS). Cys-28 is lipidated: N-palmitoyl cysteine. Residue Cys-28 is the site of S-diacylglycerol cysteine attachment. 2 disordered regions span residues 35-112 (EKDK…KSNV) and 134-236 (SEKQ…GDAF). A compositionally biased stretch (polar residues) spans 43 to 60 (STNLSEPNKSNTSKTNTF). Basic and acidic residues predominate over residues 61 to 74 (QDKKDSTNKIDSQE). 2 stretches are compositionally biased toward polar residues: residues 75 to 112 (SSKT…KSNV) and 143 to 157 (NASS…NTLK). The segment covering 158 to 175 (NQDKTKQENDQFKQESKD) has biased composition (basic and acidic residues). Residues 193 to 212 (VISSQSTTRLEMPKNDQSNS) show a composition bias toward polar residues. The span at 215–228 (EDNKKSPESPKWWE) shows a compositional bias: basic and acidic residues.

The protein belongs to the M.pulmonis LipAB lipoprotein family.

It localises to the cell membrane. In Mycoplasmopsis pulmonis (strain UAB CTIP) (Mycoplasma pulmonis), this protein is Lipoprotein B (lipB).